The sequence spans 249 residues: Ubiquinone biosynthesis protein COQ4 homolog, mitochondrial (249 aa).

His134, Asp135, His138, and Glu150 together coordinate Zn(2+).

Belongs to the COQ4 family. Component of a multi-subunit COQ enzyme complex. Zn(2+) is required as a cofactor.

The protein localises to the mitochondrion inner membrane. It carries out the reaction a 4-hydroxy-3-methoxy-5-(all-trans-polyprenyl)benzoate + H(+) = a 2-methoxy-6-(all-trans-polyprenyl)phenol + CO2. It functions in the pathway cofactor biosynthesis; ubiquinone biosynthesis. Its function is as follows. Lyase that catalyzes the C1-decarboxylation of 4-hydroxy-3-methoxy-5-(all-trans-polyprenyl)benzoic acid into 2-methoxy-6-(all-trans-polyprenyl)phenol during ubiquinone biosynthesis. The sequence is that of Ubiquinone biosynthesis protein COQ4 homolog, mitochondrial from Trypanosoma brucei brucei (strain 927/4 GUTat10.1).